A 458-amino-acid polypeptide reads, in one-letter code: Opine oxidase subunit A (458 aa).

To T-protein and to dimethylglycine dehydrogenase. In terms of assembly, heterodimer of a subunit A and a subunit B.

The protein operates within opine metabolism; octopine degradation. Its function is as follows. Oxidative cleavage of octopine into L-arginine and pyruvate. This is Opine oxidase subunit A (ooxA) from Rhizobium meliloti (strain 1021) (Ensifer meliloti).